Reading from the N-terminus, the 254-residue chain is uncharacterized protein (254 aa).

This is an uncharacterized protein from Haemophilus influenzae (strain ATCC 51907 / DSM 11121 / KW20 / Rd).